Here is a 169-residue protein sequence, read N- to C-terminus: 16S rRNA aminocarboxypropyltransferase (169 aa).

Residues T17, L67, L90, and T109 each contribute to the S-adenosyl-L-methionine site.

Belongs to the TDD superfamily. TSR3 family.

The protein resides in the cytoplasm. The catalysed reaction is an N(1)-methylpseudouridine in rRNA + S-adenosyl-L-methionine = N(1)-methyl-N(3)-[(3S)-3-amino-3-carboxypropyl]pseudouridine in rRNA + S-methyl-5'-thioadenosine + H(+). Its function is as follows. Aminocarboxypropyltransferase that catalyzes the aminocarboxypropyl transfer on pseudouridine corresponding to position 914 in M.jannaschii 16S rRNA. It constitutes the last step in biosynthesis of the hypermodified N1-methyl-N3-(3-amino-3-carboxypropyl) pseudouridine (m1acp3-Psi). The protein is 16S rRNA aminocarboxypropyltransferase of Methanothermobacter thermautotrophicus (strain ATCC 29096 / DSM 1053 / JCM 10044 / NBRC 100330 / Delta H) (Methanobacterium thermoautotrophicum).